Consider the following 85-residue polypeptide: Sec-independent protein translocase protein TatA (85 aa).

Residues 1–21 form a helical membrane-spanning segment; sequence MGSMSIWHWLVVGVLVLLLFG. Residues 39-85 form a disordered region; the sequence is FKKGMSEEDEPTQPAEPRPTPRLQQQPPIEPNADPKLQPMQDDRPQH.

This sequence belongs to the TatA/E family. As to quaternary structure, the Tat system comprises two distinct complexes: a TatABC complex, containing multiple copies of TatA, TatB and TatC subunits, and a separate TatA complex, containing only TatA subunits. Substrates initially bind to the TatABC complex, which probably triggers association of the separate TatA complex to form the active translocon.

It is found in the cell inner membrane. In terms of biological role, part of the twin-arginine translocation (Tat) system that transports large folded proteins containing a characteristic twin-arginine motif in their signal peptide across membranes. TatA could form the protein-conducting channel of the Tat system. This Rhizorhabdus wittichii (strain DSM 6014 / CCUG 31198 / JCM 15750 / NBRC 105917 / EY 4224 / RW1) (Sphingomonas wittichii) protein is Sec-independent protein translocase protein TatA.